A 305-amino-acid polypeptide reads, in one-letter code: Mitochondrial uncoupling protein 2 (305 aa).

3 Solcar repeats span residues 10–104 (ISFL…VKTL), 114–205 (IPLY…IKET), and 214–297 (DSVL…VKKV). Transmembrane regions (helical) follow at residues 16–36 (FICSAFAACFAELCTIPLDTA), 73–93 (ISGLWKGVIAGLHRQCIYGGL), 120–140 (ILAALLTGAIAIIVANPTDLV), 179–199 (TGLGPNIARNAIVNAAELASY), 220–240 (LLAGLAAGFFAVCIGSPIDVV), and 270–290 (YKGFLPNFTRLGTWNAIMFLT).

The protein belongs to the mitochondrial carrier (TC 2.A.29) family.

The protein localises to the mitochondrion inner membrane. Its function is as follows. PUMPS are mitochondrial transporter proteins that create proton leaks across the inner mitochondrial membrane, thus uncoupling oxidative phosphorylation. This leads to a decrease in the efficiency of oxidative phosphorylation and an increase in heat production. May be involved in protecting plant cells against oxidative stress damage. In Arabidopsis thaliana (Mouse-ear cress), this protein is Mitochondrial uncoupling protein 2 (PUMP2).